The primary structure comprises 383 residues: Na(+)/H(+) antiporter (383 aa).

The next 12 helical transmembrane spans lie at 1 to 21 (MEFI…SHIS), 24 to 44 (FGIP…QAGL), 51 to 71 (ILVH…AGLE), 83 to 103 (PGMF…WLTG), 112 to 132 (EAIF…VEVL), 145 to 165 (TILG…SFSL), 186 to 206 (LFYF…LMSL), 216 to 236 (IIIM…LIGL), 262 to 282 (VEAL…GLEV), 291 to 311 (ILFI…GGYI), 323 to 343 (ALMV…ILQI), and 353 to 373 (HYYS…PLIL).

This sequence belongs to the monovalent cation:proton antiporter 2 (CPA2) transporter (TC 2.A.37) family.

The protein localises to the cell membrane. Na(+)/H(+) antiporter that extrudes sodium in exchange for external protons. Can also transport lithium. The sequence is that of Na(+)/H(+) antiporter (napA) from Enterococcus hirae.